The primary structure comprises 379 residues: Cobalt-precorrin-5B C(1)-methyltransferase (379 aa).

The protein belongs to the CbiD family.

It catalyses the reaction Co-precorrin-5B + S-adenosyl-L-methionine = Co-precorrin-6A + S-adenosyl-L-homocysteine. It participates in cofactor biosynthesis; adenosylcobalamin biosynthesis; cob(II)yrinate a,c-diamide from sirohydrochlorin (anaerobic route): step 6/10. Functionally, catalyzes the methylation of C-1 in cobalt-precorrin-5B to form cobalt-precorrin-6A. The polypeptide is Cobalt-precorrin-5B C(1)-methyltransferase (Salmonella dublin (strain CT_02021853)).